A 407-amino-acid polypeptide reads, in one-letter code: Elongation factor Tu (407 aa).

The 208-residue stretch at 10 to 217 folds into the tr-type G domain; the sequence is KPHVNVGTIG…TLDEYIPEPE (208 aa). The G1 stretch occupies residues 19-26; that stretch reads GHVDHGKT. 19–26 serves as a coordination point for GTP; the sequence is GHVDHGKT. Mg(2+) is bound at residue threonine 26. The segment at 60–64 is G2; the sequence is GITIA. Positions 81-84 are G3; it reads DCPG. GTP-binding positions include 81 to 85 and 136 to 139; these read DCPGH and NKAD. A G4 region spans residues 136-139; sequence NKAD. The tract at residues 184-186 is G5; sequence SAL.

The protein belongs to the TRAFAC class translation factor GTPase superfamily. Classic translation factor GTPase family. EF-Tu/EF-1A subfamily. Monomer.

It is found in the cytoplasm. The enzyme catalyses GTP + H2O = GDP + phosphate + H(+). GTP hydrolase that promotes the GTP-dependent binding of aminoacyl-tRNA to the A-site of ribosomes during protein biosynthesis. The sequence is that of Elongation factor Tu from Teredinibacter turnerae (strain ATCC 39867 / T7901).